Reading from the N-terminus, the 752-residue chain is Probable beta-glucosidase D (752 aa).

The signal sequence occupies residues 1–18; that stretch reads MRFVSLAVGAALLGAAGA. 2 N-linked (GlcNAc...) asparagine glycosylation sites follow: asparagine 187 and asparagine 237. The active site involves aspartate 265. N-linked (GlcNAc...) asparagine glycosylation is found at asparagine 299, asparagine 343, asparagine 441, asparagine 510, asparagine 532, asparagine 571, asparagine 586, asparagine 638, asparagine 661, and asparagine 743.

This sequence belongs to the glycosyl hydrolase 3 family.

The protein resides in the secreted. The enzyme catalyses Hydrolysis of terminal, non-reducing beta-D-glucosyl residues with release of beta-D-glucose.. It functions in the pathway glycan metabolism; cellulose degradation. Beta-glucosidases are one of a number of cellulolytic enzymes involved in the degradation of cellulosic biomass. Catalyzes the last step releasing glucose from the inhibitory cellobiose. In Aspergillus oryzae (strain ATCC 42149 / RIB 40) (Yellow koji mold), this protein is Probable beta-glucosidase D (bglD).